A 1032-amino-acid chain; its full sequence is Kinesin heavy chain isoform 5A (1032 aa).

A2 is modified (N-acetylalanine). The Kinesin motor domain occupies 9 to 327; sequence SIKVLCRFRP…LMFGQRAKTI (319 aa). 86-93 provides a ligand contact to ATP; the sequence is GQTSSGKT. The interval 174–315 is microtubule-binding; it reads VSGPEEILDV…PSSYNDAETK (142 aa). The necessary for interaction with ZFYVE27 stretch occupies residues 271–361; that stretch reads EGTKSYVPYR…KTKAQKETIA (91 aa). The stretch at 331 to 906 forms a coiled coil; sequence ASVNLELTAE…VDRIKEAVRY (576 aa). The interval 353 to 1032 is interaction with BICD2; the sequence is TKAQKETIAK…FPLHQETAAS (680 aa). T397 is subject to Phosphothreonine. The segment at 904 to 939 is disordered; sequence VRYKSSGKRGHSAQIAKPVRPGHYPASSPTNPYGTR. The tract at residues 907–1032 is globular; it reads KSSGKRGHSA…FPLHQETAAS (126 aa).

This sequence belongs to the TRAFAC class myosin-kinesin ATPase superfamily. Kinesin family. Kinesin subfamily. As to quaternary structure, oligomer composed of two heavy chains and two light chains. Interacts with GRIP1. Interacts with FMR1 (via C-terminus); this interaction is increased in a mGluR-dependent manner. Interacts with BORCS5. Interacts with ZFYVE27. Interacts with VAPA, VAPB, SURF4, RAB11A (GDP-bound form), RAB11B (GDP-bound form) and RTN3 in a ZFYVE27-dependent manner. Interacts with BICD2. Interacts with DTNB.

The protein localises to the cytoplasm. Its subcellular location is the perinuclear region. The protein resides in the cytoskeleton. It localises to the perikaryon. The catalysed reaction is ATP + H2O + a kinesin associated with a microtubule at position (n) = ADP + phosphate a kinesin associated with a microtubule at position (n+1, toward the plus end).. Functionally, microtubule-dependent motor required for slow axonal transport of neurofilament proteins (NFH, NFM and NFL). Can induce formation of neurite-like membrane protrusions in non-neuronal cells in a ZFYVE27-dependent manner. The ZFYVE27-KIF5A complex contributes to the vesicular transport of VAPA, VAPB, SURF4, RAB11A, RAB11B and RTN3 proteins in neurons. Required for anterograde axonal transportation of MAPK8IP3/JIP3 which is essential for MAPK8IP3/JIP3 function in axon elongation. The protein is Kinesin heavy chain isoform 5A (KIF5A) of Pongo abelii (Sumatran orangutan).